Here is a 524-residue protein sequence, read N- to C-terminus: Strychnine-10-hydroxylase (524 aa).

The chain crosses the membrane as a helical span at residues 6 to 26 (LYIHTAILGLISLFLILHFVF). A heme-binding site is contributed by Cys466.

It belongs to the cytochrome P450 family. Heme serves as cofactor.

The protein resides in the membrane. The enzyme catalyses strychnine + reduced [NADPH--hemoprotein reductase] + O2 = 10-hydroxystrychnine + oxidized [NADPH--hemoprotein reductase] + H2O + H(+). The protein operates within alkaloid biosynthesis. Its function is as follows. Monooxygenase involved in the biosynthesis of curare monoterpene indole alkaloids (MIAs), natural products such as strychnine, a neurotoxic compound used as a pesticide to control rodents, and its pharmacologically active derivatives, including brucine, used to regulate blood pressure. Curare alkaloids act as animal glycine receptor antagonists. Catalyzes the conversion of strychnine to 10-OH strychnine. This Strychnos nux-vomica (Poison nut) protein is Strychnine-10-hydroxylase.